Consider the following 100-residue polypeptide: Acylphosphatase (100 aa).

Positions 14-100 constitute an Acylphosphatase-like domain; that stretch reads RLSAWVHGHV…RGDLTGFEER (87 aa). Residues arginine 29 and asparagine 47 contribute to the active site.

This sequence belongs to the acylphosphatase family.

The catalysed reaction is an acyl phosphate + H2O = a carboxylate + phosphate + H(+). In Nocardia farcinica (strain IFM 10152), this protein is Acylphosphatase (acyP).